A 211-amino-acid polypeptide reads, in one-letter code: Glutathione S-transferase class-mu 28 kDa isozyme (211 aa).

Residues 4 to 86 enclose the GST N-terminal domain; the sequence is DHIKVIYFNG…YMAKKHHMMG (83 aa). Residues Y10, R16, W41, K45, L53, E70, S71, and D104 each contribute to the glutathione site. In terms of domain architecture, GST C-terminal spans 88–211; it reads TDEEYYNVEK…YLSDRAATPF (124 aa).

The protein belongs to the GST superfamily. Mu family. As to quaternary structure, homodimer.

It catalyses the reaction RX + glutathione = an S-substituted glutathione + a halide anion + H(+). In terms of biological role, conjugation of reduced glutathione to a wide number of exogenous and endogenous hydrophobic electrophiles. Its function is as follows. GST isoenzymes appear to play a central role in the parasite detoxification system. Other functions are also suspected including a role in increasing the solubility of haematin in the parasite gut. This chain is Glutathione S-transferase class-mu 28 kDa isozyme, found in Schistosoma bovis (Blood fluke).